The primary structure comprises 215 residues: 3-isopropylmalate dehydratase small subunit (215 aa).

This sequence belongs to the LeuD family. LeuD type 1 subfamily. In terms of assembly, heterodimer of LeuC and LeuD.

The catalysed reaction is (2R,3S)-3-isopropylmalate = (2S)-2-isopropylmalate. The protein operates within amino-acid biosynthesis; L-leucine biosynthesis; L-leucine from 3-methyl-2-oxobutanoate: step 2/4. In terms of biological role, catalyzes the isomerization between 2-isopropylmalate and 3-isopropylmalate, via the formation of 2-isopropylmaleate. The protein is 3-isopropylmalate dehydratase small subunit of Polynucleobacter necessarius subsp. necessarius (strain STIR1).